The primary structure comprises 99 residues: Small ribosomal subunit protein bS20 (99 aa).

Belongs to the bacterial ribosomal protein bS20 family.

Its function is as follows. Binds directly to 16S ribosomal RNA. This chain is Small ribosomal subunit protein bS20, found in Caldicellulosiruptor bescii (strain ATCC BAA-1888 / DSM 6725 / KCTC 15123 / Z-1320) (Anaerocellum thermophilum).